We begin with the raw amino-acid sequence, 243 residues long: Leucyl/phenylalanyl-tRNA--protein transferase (243 aa).

Belongs to the L/F-transferase family.

It is found in the cytoplasm. The enzyme catalyses N-terminal L-lysyl-[protein] + L-leucyl-tRNA(Leu) = N-terminal L-leucyl-L-lysyl-[protein] + tRNA(Leu) + H(+). The catalysed reaction is N-terminal L-arginyl-[protein] + L-leucyl-tRNA(Leu) = N-terminal L-leucyl-L-arginyl-[protein] + tRNA(Leu) + H(+). It carries out the reaction L-phenylalanyl-tRNA(Phe) + an N-terminal L-alpha-aminoacyl-[protein] = an N-terminal L-phenylalanyl-L-alpha-aminoacyl-[protein] + tRNA(Phe). Functions in the N-end rule pathway of protein degradation where it conjugates Leu, Phe and, less efficiently, Met from aminoacyl-tRNAs to the N-termini of proteins containing an N-terminal arginine or lysine. This Vibrio cholerae serotype O1 (strain ATCC 39541 / Classical Ogawa 395 / O395) protein is Leucyl/phenylalanyl-tRNA--protein transferase.